The sequence spans 953 residues: Coatomer subunit beta-1 (953 aa).

HEAT repeat units follow at residues 49–87 (ETLP…RDVA), 93–127 (PEMI…LNEP), 128–165 (ELLE…LPHG), 314–351 (DVMV…PRNV), and 393–430 (EVAG…TNPK).

Oligomeric complex that consists of at least the alpha, beta, beta', gamma, delta, epsilon and zeta subunits.

The protein resides in the cytoplasm. It localises to the golgi apparatus membrane. Its subcellular location is the cytoplasmic vesicle. It is found in the COPI-coated vesicle membrane. In terms of biological role, the coatomer is a cytosolic protein complex that binds to dilysine motifs and reversibly associates with Golgi non-clathrin-coated vesicles, which further mediate biosynthetic protein transport from the ER, via the Golgi up to the trans Golgi network. Coatomer complex is required for budding from Golgi membranes, and is essential for the retrograde Golgi-to-ER transport of dilysine-tagged proteins. This chain is Coatomer subunit beta-1, found in Oryza sativa subsp. japonica (Rice).